Consider the following 169-residue polypeptide: Peptide deformylase (169 aa).

Fe cation-binding residues include Cys94 and His136. Glu137 is a catalytic residue. Residue His140 participates in Fe cation binding.

Belongs to the polypeptide deformylase family. Requires Fe(2+) as cofactor.

It catalyses the reaction N-terminal N-formyl-L-methionyl-[peptide] + H2O = N-terminal L-methionyl-[peptide] + formate. Its function is as follows. Removes the formyl group from the N-terminal Met of newly synthesized proteins. Requires at least a dipeptide for an efficient rate of reaction. N-terminal L-methionine is a prerequisite for activity but the enzyme has broad specificity at other positions. In Phenylobacterium zucineum (strain HLK1), this protein is Peptide deformylase.